Consider the following 1799-residue polypeptide: MVDPLKIFWVLTNSTYLVTKFVRIGIADKNDSPPYFDRFLYETEIDENADLQSTVLTVNAKDHNESTNIRYQITGGNIGNAFAVQNTTGVIYVASPLDYETRPRYELRLEATRNRKNNYTTVVINVRDVNDNPPVFDRQTYRTQITEEDDRNLPKRILQVTATDGDVDRPINIVYFLTGQGIDPDNPANSKFDINRTTGDIFVLKPLDRDQPNGRPQWRFTVFAQDEGGEGLVGYADIQVNLKDINDNAPQFPQGIYFGNVTENGTAGSSVMTMSAVDYDDPNESTNAKLIYSIEKNVIEEETGAPIFEIEPETGLIKTAVCCLDRERTPDYSIQVVAMDGGGLKGTGTASIRVKDLNDMPPQFTKDEWVTEVDETNGTYIPETPILTVTVQDEDETNTFQYKVVPNSGFGADKFAMVRNGDGTGSLKIIQPLDYEDPLQSSGFRFRIQVNDKGDDGPGGSDKYHVAYSWVVVKLRDINDNVPKFDREHIEVSIYEDTKVGTILEQFKATDADQGGHSKVAYKIVRSTNRKRQFAISDRGAVSIQRPLDRETQDRHHIQILAIDDGSPARTATATLTVIVKDVNDNAPTFAQDYKPTLPENVSGKKILEVAAKDPDDRLRGNGGPFTFRLDPLASDEIKAGFKVEYDRRGDNENGVAIISSLRPFDREAQKSYAIPIEIKDNGAPAMTGTSTLTVTIGDVNDNKMQPGSKSVLVYNYQGQSQDTPIGRVYVNDPDDWDVPDKKYYWEVQEHQRFKLDTDTGILTMRAGTRRGRYQLRFKVYDREHGQEDIPANLSVTVRDITAEAVQQAGSMRLSHITDEDFVRTWNPVKNQVEPSKLERFRNKLAELLYTDRDNVDVFSVQLKEGSPYPLTDVHFAARSATQQPYFKAVRLNGVVQMHREEIEKDVGLNITMVNINECLHEGKGKCGSNSCTSKVELGKKPYTVSVNRTALVGVRLDISAQCVCRARNFTHQDHNCRTHLCYNGGRCVETRNGPKCVACPVGYNGPRCQQSTRSFRGNGWAWYPPLQLCQESHLSLEFITRVADGLILYNGPIVPPKPEETVISDFIALELEQGYPRLLIDFGSGTLELRVKTKKTLDDGVWHRLDIFWDTENVRMVVDFCRTALVSEMEDGTPPEFDDNACQARGQIPPFAESLNLNQPLQLGGLYRQHFDQTLYNWQYAFSSKGFDGCIRNVIHNSEHYDLAFPALARNSFPACPQTDEVCLKTEHTARCWEHGNCVASLVQAKCHCQPGWMGPGCNVPTIPTTFKAQSYVKFALSFEPDRFSTQLQLRFRTREQGGELFRVSDQHHREYAILELRRGHLQFRYNLNSMRNEEQLLTLTAIAVNDGQWHVIRISRYGSAALMELDGGESRRYNESFHFTGHQWLTIDKQEGVYAGGKAEYTGIKTFEVQSDFQRSCLDDIRLDGKHLPLPPAMNGTQWGQATMARNLERNCPSNRPCSNVICPDPFDCVDLWNEYECTCSEGRIMSSDTKGCVDRNECLDLPCLNGATCINLEPRLRYRCICPEGYWGENCELVQEGQRLKLSMGALGAIFVCLIIILILALIFVLYSRKRKTTKKKKRSGPEKDVRETVISYEDEGGGEDDMTAFDITPLQIPISAQGGPPDIAACKMPIIYPVMTLLPPGQELNVAYLMEERKQRIDKDNNAPPFDDLRNFTFEGSGSIAESLSSLASGTDDENQDFNYLQNWGPRFNALAAMYVHDKAKASSQLPSDGGGGSGDGPGPGASSSSPLGGGGTGGGSGIPGNVLAVVATGSGAGPGGGGGSSGLMPLPEVDKVVL.

N-linked (GlcNAc...) asparagine glycosylation is found at Asn13, Asn64, Asn86, Asn118, Asn195, Asn260, Asn264, Asn283, and Asn377. Cadherin domains follow at residues 37–136 (DRFL…PPVF), 137–252 (DRQT…APQF), 253–364 (PQGI…PPQF), 368–485 (EWVT…VPKF), 486–590 (DREH…APTF), 590–709 (FAQD…QPGS), and 708–812 (GSKS…AGSM). Residues Asn601, Asn793, Asn910, Asn948, and Asn969 are each glycosylated (N-linked (GlcNAc...) asparagine). The EGF-like 1 domain occupies 973-1010 (QDHNCRTHLCYNGGRCVETRNGPKCVACPVGYNGPRCQ). Cystine bridges form between Cys977–Cys988, Cys982–Cys997, Cys1000–Cys1009, Cys1191–Cys1217, Cys1224–Cys1239, Cys1233–Cys1248, and Cys1250–Cys1259. The Laminin G-like 1 domain occupies 1011–1217 (QSTRSFRGNG…ALARNSFPAC (207 aa)). The region spanning 1220 to 1260 (TDEVCLKTEHTARCWEHGNCVASLVQAKCHCQPGWMGPGCN) is the EGF-like 2 domain. Residues 1263–1454 (TIPTTFKAQS…TMARNLERNC (192 aa)) form the Laminin G-like 2 domain. N-linked (GlcNAc...) asparagine glycans are attached at residues Asn1376 and Asn1437. 4 disulfides stabilise this stretch: Cys1419–Cys1454, Cys1501–Cys1512, Cys1506–Cys1523, and Cys1525–Cys1534. Residues 1497-1535 (DRNECLDLPCLNGATCINLEPRLRYRCICPEGYWGENCE) enclose the EGF-like 3; calcium-binding domain. Residues 1549–1569 (ALGAIFVCLIIILILALIFVL) form a helical membrane-spanning segment. The tract at residues 1726–1799 (ASSQLPSDGG…PLPEVDKVVL (74 aa)) is disordered. Composition is skewed to gly residues over residues 1733-1744 (DGGGGSGDGPGP), 1752-1763 (LGGGGTGGGSGI), and 1775-1786 (SGAGPGGGGGSS).

The protein resides in the cell membrane. In terms of biological role, cadherins are calcium-dependent cell adhesion proteins. They preferentially interact with themselves in a homophilic manner in connecting cells. The chain is Putative neural-cadherin 2 (CadN2) from Drosophila melanogaster (Fruit fly).